The sequence spans 469 residues: Cytosolic beta-glucosidase (469 aa).

Residues Gln-17, His-120, and Asn-164 each contribute to the substrate site. Glu-165 serves as the catalytic Proton donor. Tyr-309 is a binding site for substrate. Residue Glu-373 is the Nucleophile of the active site. Residues Trp-417 and 424-425 (EW) contribute to the substrate site.

This sequence belongs to the glycosyl hydrolase 1 family. Klotho subfamily. In terms of assembly, may interact with NEU2. In terms of processing, the N-terminus is blocked. As to expression, present in small intestine (at protein level). Expressed in liver, small intestine, colon, spleen and kidney. Down-regulated in renal cell carcinomas and hepatocellular carcinomas.

It localises to the cytoplasm. It is found in the cytosol. The enzyme catalyses Hydrolysis of terminal, non-reducing beta-D-glucosyl residues with release of beta-D-glucose.. The catalysed reaction is a beta-D-glucosyl-(1&lt;-&gt;1')-N-acylsphing-4-enine + H2O = an N-acylsphing-4-enine + D-glucose. It catalyses the reaction a beta-D-galactosyl-(1&lt;-&gt;1')-N-acylsphing-4-enine + H2O = an N-acylsphing-4-enine + D-galactose. It carries out the reaction beta-D-glucosyl-(1&lt;-&gt;1)-sphing-4-enine + H2O = sphing-4-enine + D-glucose. The enzyme catalyses beta-D-glucosyl-(1&lt;-&gt;1)-N-octadecanoylsphing-4-enine + H2O = N-octadecanoylsphing-4-enine + D-glucose. The catalysed reaction is beta-D-galactosyl-(1&lt;-&gt;1)-sphing-4-enine + H2O = sphing-4-enine + D-galactose. It catalyses the reaction beta-D-galactosyl-(1&lt;-&gt;1')-N-octadecanoylsphing-4-enine + H2O = N-octadecanoylsphing-4-enine + D-galactose. It carries out the reaction a beta-D-xylosyl-(1&lt;-&gt;1')-N-acylsphing-4-enine + cholesterol = cholesteryl 3-beta-D-xyloside + an N-acylsphing-4-enine. Its activity is regulated as follows. Inhibited by 2,4-dinitrophenyl-2-fluoro-2-deoxy-beta-D-glucopyranoside. Inhibited by sodium taurocholate. Inhibited by alpha-1-C-nonyl-DIX/AnDIX. The glucosylceramidase activity is slightly inhibited by conduritol B epoxide/CBE while the galactosylceramidase activity is not. Neutral cytosolic beta-glycosidase with a broad substrate specificity that could play a role in the catabolism of glycosylceramides. Has a significant glucosylceramidase activity in vitro. However, that activity is relatively low and its significance in vivo is not clear. Hydrolyzes galactosylceramides/GalCers, glucosylsphingosines/GlcSphs and galactosylsphingosines/GalSphs. However, the in vivo relevance of these activities is unclear. It can also hydrolyze a broad variety of dietary glycosides including phytoestrogens, flavonols, flavones, flavanones and cyanogens in vitro and could therefore play a role in the metabolism of xenobiotics. Possesses transxylosylase activity in vitro using xylosylated ceramides/XylCers (such as beta-D-xylosyl-(1&lt;-&gt;1')-N-acylsphing-4-enine) as xylosyl donors and cholesterol as acceptor. Could also play a role in the catabolism of cytosolic sialyl free N-glycans. The sequence is that of Cytosolic beta-glucosidase from Homo sapiens (Human).